The primary structure comprises 133 residues: Putative pre-16S rRNA nuclease (133 aa).

Belongs to the YqgF nuclease family.

The protein resides in the cytoplasm. Functionally, could be a nuclease involved in processing of the 5'-end of pre-16S rRNA. In Alcanivorax borkumensis (strain ATCC 700651 / DSM 11573 / NCIMB 13689 / SK2), this protein is Putative pre-16S rRNA nuclease.